The following is a 419-amino-acid chain: MNKHQKPVLTGQRFKTRKRDEKEKFEPTVFRDTLVQGLNEAGDDLEAVAKFLDSTGSRLDYRRYADTLFDILVAGSMLAPGGTRIDDGDKTKMTNHCVFSANEDHETIRNYAQVFNKLIRRYKYLEKAFEDEMKKLLLFLKAFSEAEQTKLAMLSGILLGNGTLPATILTSLFTDSLVKEGIAASFAVKLFKAWMAEKDANSVTSSLRKANLDKRLLELFPVNRQSVDHFAKYFTDAGLKELSDFLRVQQSLGTRKELQKELQERLSQECPIKEVVLYVKEEMKRNDLPETAVIGLLWTCIMNAVEWNKKEELVAEQALKHLKQYAPLLAVFSSQGQSELVLLQKVQEYCYDNIHFMKAFQKIVVLFYKADVLSEEAILKWYKEAHAAKGKSVFLDQMKKFVEWLQNAEEESESEGEES.

The disordered stretch occupies residues 1 to 22 (MNKHQKPVLTGQRFKTRKRDEK). Lys-117 is subject to N6-acetyllysine. In terms of domain architecture, W2 spans 248–415 (VQQSLGTRKE…QNAEEESESE (168 aa)). A phosphoserine mark is found at Ser-412, Ser-414, and Ser-419.

It belongs to the BZW family. As to quaternary structure, interacts with EIF3E, EIF2S2 and EIF3C.

The protein resides in the cytoplasm. Translation initiation regulator which represses non-AUG initiated translation and repeat-associated non-AUG (RAN) initiated translation by acting as a competitive inhibitor of eukaryotic translation initiation factor 5 (EIF5) function. Increases the accuracy of translation initiation by impeding EIF5-dependent translation from non-AUG codons by competing with it for interaction with EIF2S2 within the 43S pre-initiation complex (PIC) in an EIF3C-binding dependent manner. This is eIF5-mimic protein 1 (Bzw2) from Mus musculus (Mouse).